We begin with the raw amino-acid sequence, 369 residues long: Peptide chain release factor 2 (369 aa).

Residue Gln251 is modified to N5-methylglutamine.

This sequence belongs to the prokaryotic/mitochondrial release factor family. In terms of processing, methylated by PrmC. Methylation increases the termination efficiency of RF2.

It localises to the cytoplasm. In terms of biological role, peptide chain release factor 2 directs the termination of translation in response to the peptide chain termination codons UGA and UAA. This is Peptide chain release factor 2 (prfB) from Chlamydia pneumoniae (Chlamydophila pneumoniae).